Here is a 306-residue protein sequence, read N- to C-terminus: Replication termination factor 2 (306 aa).

Residues 193–276 form a disordered region; that stretch reads AKLEKKTKKP…RSIADSEESE (84 aa). A compositionally biased stretch (basic and acidic residues) spans 226–240; sequence GKPEEASLDSREKKT. Residues 243-255 show a composition bias toward polar residues; the sequence is APKSTAMNESSSG. S287 carries the phosphoserine modification.

The protein belongs to the rtf2 family. In terms of assembly, interacts with DDI2; probably also interacts with DDI1. Post-translationally, undergoes proteasomal degradation, via DDI1 and DDI2. Removal from stalled replisomes and degradation are required for genome stability.

The protein localises to the chromosome. Functionally, replication termination factor which is a component of the elongating replisome. Required for ATR pathway signaling upon DNA damage and has a positive activity during DNA replication. Might function to facilitate fork pausing at replication fork barriers like the rDNA. May be globally required to stimulate ATR signaling after the fork stalls or encounters a lesion. Interacts with nascent DNA. The chain is Replication termination factor 2 from Homo sapiens (Human).